The sequence spans 1431 residues: Stabilin-2 (1431 aa).

Topologically, residues 1 to 1322 (SLPSLLTRLE…PPTAATAAHS (1322 aa)) are extracellular. One can recognise an FAS1 domain in the interval 2 to 130 (LPSLLTRLEQ…GVIHGLEKVL (129 aa)). Residues N112 and N140 are each glycosylated (N-linked (GlcNAc...) asparagine). The Laminin EGF-like 1 domain maps to 207 to 272 (PQCQACPGRG…CSCVHGRCSQ (66 aa)). Disulfide bonds link C212–C226, C220–C236, C238–C247, C259–C270, C263–C280, C282–C291, C300–C310, C304–C320, C322–C333, C339–C352, C346–C362, C364–C375, C381–C394, C388–C404, C406–C417, C423–C436, C430–C446, and C448–C459. Residues N231 and N243 are each glycosylated (N-linked (GlcNAc...) asparagine). 4 consecutive EGF-like domains span residues 296 to 334 (TTDNCNGTCHTSANCLLDPDGKASCKCAAGFRGNGTVCT), 335 to 376 (AINA…IVCL), 377 to 418 (EINP…KVCS), and 419 to 460 (LINV…IVCR). N-linked (GlcNAc...) asparagine glycosylation is present at N301. N329 carries N-linked (GlcNAc...) asparagine glycosylation. A glycan (N-linked (GlcNAc...) asparagine) is linked at N437. FAS1 domains are found at residues 460 to 588 (RGSI…DKLL) and 604 to 745 (VLQN…DCLL). N607 carries an N-linked (GlcNAc...) asparagine glycan. The Laminin EGF-like 2 domain maps to 822–887 (PDCQACPGGP…SCSEHGQCDE (66 aa)). 6 disulfide bridges follow: C827–C841, C835–C851, C853–C862, C874–C885, C879–C895, and C897–C906. A glycan (N-linked (GlcNAc...) asparagine) is linked at N858. N-linked (GlcNAc...) asparagine glycosylation occurs at N929. EGF-like domains follow at residues 947 to 987 (VVDF…YSCI) and 988 to 1030 (EIDP…VDCE). Disulfide bonds link C951-C964, C958-C973, C975-C986, C992-C1006, C1000-C1016, C1018-C1029, C1085-C1154, and C1109-C1130. Positions 1063–1156 (GVFHLRSPLG…SEMWDVFCYR (94 aa)) constitute a Link domain. N-linked (GlcNAc...) asparagine glycosylation is found at N1145, N1161, N1233, N1249, and N1258. Residues 1176–1310 (SGNLLQVLMS…GILHIISEPL (135 aa)) form the FAS1 4 domain. Residues 1323-1343 (GLGTGIFCAVVLVTGAIALAA) traverse the membrane as a helical segment. Over 1344 to 1431 (YSYFRLKQRT…QQATTVTVPR (88 aa)) the chain is Cytoplasmic. The interval 1368-1378 (WLLASSSPRIS) is interaction with TMSB4X.

In terms of assembly, interacts with GULP1, heparin, alpha-M/beta-2 integrin (ITGAM and ITGB2), and thymosin beta 4 (TMSB4X). Post-translationally, glycosylated. Proteolytically processed to yield a 175 kDa protein. Initially expressed in all vascular cells, including those of sinusoidal-like structures, vitellin veins, and hepatic veins or sinus venosus, in E13.5 fetal liver. The expression then progressively disappears in the portal and hepatic veins, but the expression in sinusoidals endothelial cells (SECs) is retained and becomes stronger during development.

It localises to the cytoplasm. The protein resides in the cell membrane. Its function is as follows. Phosphatidylserine receptor that enhances the engulfment of apoptotic cells. Hyaluronan receptor that binds to and mediates endocytosis of hyaluronic acid (HA). Also acts, in different species, as a primary systemic scavenger receptor for heparin (Hep), chondroitin sulfate (CS), dermatan sulfate (DS), nonglycosaminoglycan (GAG), acetylated low-density lipoprotein (AcLDL), pro-collagen propeptides and advanced glycation end products (AGE). May serve to maintain tissue integrity by supporting extracellular matrix turnover or it may contribute to maintaining fluidity of bodily liquids by resorption of hyaluronan. Counter receptor which plays an important role in lymphocyte recruitment in the hepatic vasculature. Binds to both Gram-positive and Gram-negative bacteria and may play a role in defense against bacterial infection. The proteolytically processed 175 kDa form also functions as an endocytosis receptor for heparin internalization as well as HA and CS. In Rattus norvegicus (Rat), this protein is Stabilin-2.